Here is a 164-residue protein sequence, read N- to C-terminus: 2-C-methyl-D-erythritol 2,4-cyclodiphosphate synthase (164 aa).

Residues Asp-9 and His-11 each coordinate a divalent metal cation. 4-CDP-2-C-methyl-D-erythritol 2-phosphate-binding positions include 9-11 and 35-36; these read DVH and HS. A divalent metal cation is bound at residue His-43. 4-CDP-2-C-methyl-D-erythritol 2-phosphate-binding positions include 57–59, 62–66, 133–136, Phe-140, and Arg-143; these read DIG, FPDTD, and TTTE.

Belongs to the IspF family. Homotrimer. It depends on a divalent metal cation as a cofactor.

The enzyme catalyses 4-CDP-2-C-methyl-D-erythritol 2-phosphate = 2-C-methyl-D-erythritol 2,4-cyclic diphosphate + CMP. The protein operates within isoprenoid biosynthesis; isopentenyl diphosphate biosynthesis via DXP pathway; isopentenyl diphosphate from 1-deoxy-D-xylulose 5-phosphate: step 4/6. In terms of biological role, involved in the biosynthesis of isopentenyl diphosphate (IPP) and dimethylallyl diphosphate (DMAPP), two major building blocks of isoprenoid compounds. Catalyzes the conversion of 4-diphosphocytidyl-2-C-methyl-D-erythritol 2-phosphate (CDP-ME2P) to 2-C-methyl-D-erythritol 2,4-cyclodiphosphate (ME-CPP) with a corresponding release of cytidine 5-monophosphate (CMP). The sequence is that of 2-C-methyl-D-erythritol 2,4-cyclodiphosphate synthase from Syntrophotalea carbinolica (strain DSM 2380 / NBRC 103641 / GraBd1) (Pelobacter carbinolicus).